A 309-amino-acid polypeptide reads, in one-letter code: MQLQKLVNMFGGDLTRRYGQKVHKLTLHGGFSCPNRDGTIGRGGCTFCNVASFADEAQQHRSIAEQLAHQANLVNRAKRYLAYFQAYTSTFAEVQVLRSMYQQAVSQANIVGLCVGTRPDCVPDAVLDLLCEYKDQGYEVWLELGLQTAHDKTLHRINRGHDFACYQRTTQLARQRGLKVCSHLIVGLPGEGQAECLQTLERVVETGVDGIKLHPLHIVKGSIMAKAWEAGRLNGIELEDYTLTAGEMIRHTPPEVIYHRISASARRPTLLAPLWCENRWTGMVELDRYLNEHGVQGSALGRPWLPPTE.

Positions 17 to 254 (RYGQKVHKLT…AGEMIRHTPP (238 aa)) constitute a Radical SAM core domain. [4Fe-4S] cluster-binding residues include Cys33, Cys45, and Cys48.

The protein belongs to the radical SAM superfamily. [4Fe-4S] cluster serves as cofactor.

This is an uncharacterized protein from Escherichia coli O157:H7.